The chain runs to 321 residues: MKIYRQIKQSFSITKIVFSFFISLLLNLVAQPTICQAFPIYAQQAYQIPREATGRIVCANCHLGKKPVEIEVPQAVLPNTVFEAVVKIPIDKGAQQIQANGQKGPLNVGAVLMLPEGFKLAPAERLSEELKAKTAGLYFQPYSADKENILVIGPIPGDKNQEIIFPILSPNPETNKNVKYLKYQLHVGGNRGRGQVSPTGEKTNNTIYNASVNGRISEITKLENGGYEITITTKNGESKIETIPAGPSLVVKKGQTIKADQPLTIDPNVGGFGQMDTEIVLQSAGRVQGLIAFFISVVLAQIFLVLKKKQFEKVQAAEMNF.

The signal sequence occupies residues 1-37; that stretch reads MKIYRQIKQSFSITKIVFSFFISLLLNLVAQPTICQA. Residues phenylalanine 38, cysteine 58, cysteine 61, and histidine 62 each contribute to the heme site. A helical membrane pass occupies residues 287 to 306; that stretch reads VQGLIAFFISVVLAQIFLVL.

The protein belongs to the cytochrome f family. The 4 large subunits of the cytochrome b6-f complex are cytochrome b6, subunit IV (17 kDa polypeptide, petD), cytochrome f and the Rieske protein, while the 4 small subunits are PetG, PetL, PetM and PetN. The complex functions as a dimer. Heme is required as a cofactor.

It localises to the plastid. Its subcellular location is the cyanelle thylakoid membrane. Functionally, component of the cytochrome b6-f complex, which mediates electron transfer between photosystem II (PSII) and photosystem I (PSI), cyclic electron flow around PSI, and state transitions. The polypeptide is Cytochrome f (petA) (Cyanophora paradoxa).